Here is an 889-residue protein sequence, read N- to C-terminus: Alanine--tRNA ligase (889 aa).

Zn(2+) is bound by residues H564, H568, C677, and H681.

The protein belongs to the class-II aminoacyl-tRNA synthetase family. The cofactor is Zn(2+).

The protein localises to the cytoplasm. The enzyme catalyses tRNA(Ala) + L-alanine + ATP = L-alanyl-tRNA(Ala) + AMP + diphosphate. Catalyzes the attachment of alanine to tRNA(Ala) in a two-step reaction: alanine is first activated by ATP to form Ala-AMP and then transferred to the acceptor end of tRNA(Ala). Also edits incorrectly charged Ser-tRNA(Ala) and Gly-tRNA(Ala) via its editing domain. This Rhodopseudomonas palustris (strain ATCC BAA-98 / CGA009) protein is Alanine--tRNA ligase.